The sequence spans 331 residues: 6-phosphogluconolactonase (331 aa).

The protein belongs to the cycloisomerase 2 family.

It catalyses the reaction 6-phospho-D-glucono-1,5-lactone + H2O = 6-phospho-D-gluconate + H(+). It functions in the pathway carbohydrate degradation; pentose phosphate pathway; D-ribulose 5-phosphate from D-glucose 6-phosphate (oxidative stage): step 2/3. Functionally, catalyzes the hydrolysis of 6-phosphogluconolactone to 6-phosphogluconate. The chain is 6-phosphogluconolactonase from Klebsiella pneumoniae (strain 342).